Here is a 368-residue protein sequence, read N- to C-terminus: UPF0284 protein PCC8801_3324 (368 aa).

Belongs to the UPF0284 family.

The chain is UPF0284 protein PCC8801_3324 from Rippkaea orientalis (strain PCC 8801 / RF-1) (Cyanothece sp. (strain PCC 8801)).